A 205-amino-acid polypeptide reads, in one-letter code: SCO2-like protein RP587 (205 aa).

3 residues coordinate Cu cation: C82, C86, and H172.

Belongs to the SCO1/2 family.

The polypeptide is SCO2-like protein RP587 (Rickettsia prowazekii (strain Madrid E)).